Consider the following 531-residue polypeptide: Peptide chain release factor 3 (531 aa).

A tr-type G domain is found at Arg-10–Lys-278. Residues Ser-19–Thr-26, Asp-87–His-91, and Asn-141–Asp-144 each bind GTP.

This sequence belongs to the TRAFAC class translation factor GTPase superfamily. Classic translation factor GTPase family. PrfC subfamily.

The protein resides in the cytoplasm. Its function is as follows. Increases the formation of ribosomal termination complexes and stimulates activities of RF-1 and RF-2. It binds guanine nucleotides and has strong preference for UGA stop codons. It may interact directly with the ribosome. The stimulation of RF-1 and RF-2 is significantly reduced by GTP and GDP, but not by GMP. This is Peptide chain release factor 3 from Neisseria meningitidis serogroup A / serotype 4A (strain DSM 15465 / Z2491).